The following is a 766-amino-acid chain: AMP deaminase 3 (766 aa).

A phosphoserine mark is found at Ser85 and Ser107. The segment at 89 to 114 is disordered; that stretch reads QMPTQQDWKGPPTASPAMSPATPLVP. A compositionally biased stretch (low complexity) spans 99–110; that stretch reads PPTASPAMSPAT. Zn(2+)-binding residues include His316 and His318. Residues His318 and 387-392 each bind substrate; that span reads KFNSKY. Residue His585 coordinates Zn(2+). Glu588 lines the substrate pocket. The active-site Proton acceptor is His607. Asp662 lines the Zn(2+) pocket. Position 663 to 666 (663 to 666) interacts with substrate; it reads DPMQ.

The protein belongs to the metallo-dependent hydrolases superfamily. Adenosine and AMP deaminases family. As to quaternary structure, homotetramer. Zn(2+) is required as a cofactor. Found in heart, lung brain, spleen, kidney and to a lesser extent in liver.

It carries out the reaction AMP + H2O + H(+) = IMP + NH4(+). The protein operates within purine metabolism; IMP biosynthesis via salvage pathway; IMP from AMP: step 1/1. Functionally, AMP deaminase plays a critical role in energy metabolism. This Mus musculus (Mouse) protein is AMP deaminase 3.